The chain runs to 259 residues: ATP synthase subunit a 1 (259 aa).

Transmembrane regions (helical) follow at residues 30–50 (TLHV…LFFF), 90–110 (LIAP…AMDL), 135–155 (DLNA…FYSL), 209–229 (LIFI…SFPW), and 230–250 (AVFH…LTIV).

This sequence belongs to the ATPase A chain family. F-type ATPases have 2 components, CF(1) - the catalytic core - and CF(0) - the membrane proton channel. CF(1) has five subunits: alpha(3), beta(3), gamma(1), delta(1), epsilon(1). CF(0) has three main subunits: a(1), b(2) and c(9-12). The alpha and beta chains form an alternating ring which encloses part of the gamma chain. CF(1) is attached to CF(0) by a central stalk formed by the gamma and epsilon chains, while a peripheral stalk is formed by the delta and b chains.

It localises to the cell inner membrane. Functionally, key component of the proton channel; it plays a direct role in the translocation of protons across the membrane. The chain is ATP synthase subunit a 1 from Methylococcus capsulatus (strain ATCC 33009 / NCIMB 11132 / Bath).